The chain runs to 165 residues: PTS system glucose-specific EIIA component (165 aa).

The PTS EIIA type-1 domain maps to 33 to 137 (DPVFAGRMMG…STITPIVITN (105 aa)). Zn(2+) is bound by residues His70 and His85. The active-site Tele-phosphohistidine intermediate; for EIIA activity is His85. Position 85 is a phosphohistidine; by HPr (His85).

In terms of assembly, heterodimer with glycerol kinase (glpk). Zn(2+) serves as cofactor.

Its subcellular location is the cytoplasm. Its function is as follows. The phosphoenolpyruvate-dependent sugar phosphotransferase system (sugar PTS), a major carbohydrate active transport system, catalyzes the phosphorylation of incoming sugar substrates concomitantly with their translocation across the cell membrane. The enzyme II complex composed of PtsG and Crr is involved in glucose transport. The chain is PTS system glucose-specific EIIA component (crr) from Bacillus anthracis.